The following is a 308-amino-acid chain: Tetraacyldisaccharide 4'-kinase (308 aa).

Ser-63–Thr-70 lines the ATP pocket.

This sequence belongs to the LpxK family.

It catalyses the reaction a lipid A disaccharide + ATP = a lipid IVA + ADP + H(+). It functions in the pathway glycolipid biosynthesis; lipid IV(A) biosynthesis; lipid IV(A) from (3R)-3-hydroxytetradecanoyl-[acyl-carrier-protein] and UDP-N-acetyl-alpha-D-glucosamine: step 6/6. Functionally, transfers the gamma-phosphate of ATP to the 4'-position of a tetraacyldisaccharide 1-phosphate intermediate (termed DS-1-P) to form tetraacyldisaccharide 1,4'-bis-phosphate (lipid IVA). The polypeptide is Tetraacyldisaccharide 4'-kinase (Campylobacter jejuni (strain RM1221)).